The primary structure comprises 114 residues: Large ribosomal subunit protein uL18 (114 aa).

Belongs to the universal ribosomal protein uL18 family. As to quaternary structure, part of the 50S ribosomal subunit; part of the 5S rRNA/L5/L18/L25 subcomplex. Contacts the 5S and 23S rRNAs.

This is one of the proteins that bind and probably mediate the attachment of the 5S RNA into the large ribosomal subunit, where it forms part of the central protuberance. The chain is Large ribosomal subunit protein uL18 from Aster yellows phytoplasma.